Here is a 165-residue protein sequence, read N- to C-terminus: Acireductone dioxygenase (165 aa).

Fe(2+)-binding residues include His-90, His-92, Glu-96, and His-134. Ni(2+) contacts are provided by His-90, His-92, Glu-96, and His-134.

It belongs to the acireductone dioxygenase (ARD) family. As to quaternary structure, monomer. Requires Fe(2+) as cofactor. Ni(2+) serves as cofactor.

It carries out the reaction 1,2-dihydroxy-5-(methylsulfanyl)pent-1-en-3-one + O2 = 3-(methylsulfanyl)propanoate + CO + formate + 2 H(+). The catalysed reaction is 1,2-dihydroxy-5-(methylsulfanyl)pent-1-en-3-one + O2 = 4-methylsulfanyl-2-oxobutanoate + formate + 2 H(+). It functions in the pathway amino-acid biosynthesis; L-methionine biosynthesis via salvage pathway; L-methionine from S-methyl-5-thio-alpha-D-ribose 1-phosphate: step 5/6. In terms of biological role, catalyzes 2 different reactions between oxygen and the acireductone 1,2-dihydroxy-3-keto-5-methylthiopentene (DHK-MTPene) depending upon the metal bound in the active site. Fe-containing acireductone dioxygenase (Fe-ARD) produces formate and 2-keto-4-methylthiobutyrate (KMTB), the alpha-ketoacid precursor of methionine in the methionine recycle pathway. Ni-containing acireductone dioxygenase (Ni-ARD) produces methylthiopropionate, carbon monoxide and formate, and does not lie on the methionine recycle pathway. The chain is Acireductone dioxygenase from Rhodopseudomonas palustris (strain ATCC BAA-98 / CGA009).